The following is a 343-amino-acid chain: Probable beta-1,3-galactosyltransferase 13 (343 aa).

Residues 22-42 (LIVFTSLAIGLTGFLFGLSTI) form a helical; Signal-anchor for type II membrane protein membrane-spanning segment. N-linked (GlcNAc...) asparagine glycosylation is present at asparagine 265.

It belongs to the glycosyltransferase 31 family. It depends on Mn(2+) as a cofactor.

It is found in the golgi apparatus membrane. The protein operates within protein modification; protein glycosylation. Functionally, beta-1,3-galactosyltransferase that transfers galactose from UDP-galactose to substrates with a terminal glycosyl residue. In Arabidopsis thaliana (Mouse-ear cress), this protein is Probable beta-1,3-galactosyltransferase 13 (B3GALT13).